We begin with the raw amino-acid sequence, 250 residues long: 5'-nucleotidase SurE (250 aa).

Residues D8, D9, S39, and N95 each contribute to the a divalent metal cation site.

It belongs to the SurE nucleotidase family. Requires a divalent metal cation as cofactor.

It is found in the cytoplasm. It carries out the reaction a ribonucleoside 5'-phosphate + H2O = a ribonucleoside + phosphate. Its function is as follows. Nucleotidase that shows phosphatase activity on nucleoside 5'-monophosphates. The sequence is that of 5'-nucleotidase SurE from Cupriavidus pinatubonensis (strain JMP 134 / LMG 1197) (Cupriavidus necator (strain JMP 134)).